Here is a 287-residue protein sequence, read N- to C-terminus: Co-chaperone protein DjlA (287 aa).

Residues 1-6 are Periplasmic-facing; the sequence is MQIFGK. A helical transmembrane segment spans residues 7-30; the sequence is ILGAFFGFLFGGVFGALFGLFIGH. The Cytoplasmic portion of the chain corresponds to 31-287; it reads QFDKARRLSQ…DLIKKEKGFK (257 aa). Positions 192-213 are disordered; it reads GGFGGQQHQSHHSSSHGGWQQA. In terms of domain architecture, J spans 221-287; that stretch reads DAYKILGIDA…DLIKKEKGFK (67 aa).

Homodimer.

It localises to the cell inner membrane. In terms of biological role, regulatory DnaK co-chaperone. Direct interaction between DnaK and DjlA is needed for the induction of the wcaABCDE operon, involved in the synthesis of a colanic acid polysaccharide capsule, possibly through activation of the RcsB/RcsC phosphotransfer signaling pathway. The colanic acid capsule may help the bacterium survive conditions outside the host. The chain is Co-chaperone protein DjlA from Vibrio vulnificus (strain YJ016).